A 755-amino-acid chain; its full sequence is Xaa-Pro dipeptidyl-peptidase (755 aa).

Active-site charge relay system residues include S348, D468, and H498.

Belongs to the peptidase S15 family. In terms of assembly, homodimer.

Its subcellular location is the cytoplasm. It carries out the reaction Hydrolyzes Xaa-Pro-|- bonds to release unblocked, N-terminal dipeptides from substrates including Ala-Pro-|-p-nitroanilide and (sequentially) Tyr-Pro-|-Phe-Pro-|-Gly-Pro-|-Ile.. Functionally, removes N-terminal dipeptides sequentially from polypeptides having unsubstituted N-termini provided that the penultimate residue is proline. This is Xaa-Pro dipeptidyl-peptidase from Streptococcus thermophilus (strain ATCC BAA-250 / LMG 18311).